The primary structure comprises 1016 residues: FHIP family protein Bm1_18400 (1016 aa).

2 disordered regions span residues 586-608 and 757-778; these read DSLR…RSSF and SDGF…PLGK.

This sequence belongs to the FHIP family.

The protein is FHIP family protein Bm1_18400 of Brugia malayi (Filarial nematode worm).